The sequence spans 279 residues: Putative Delta(7)-sterol-C5(6)-desaturase 2 (279 aa).

A run of 2 helical transmembrane segments spans residues 48 to 68 (LAGNILYFISGFLWCFYIYYL) and 127 to 147 (FLCFLYIALYLVLVEFMIYWV). One can recognise a Fatty acid hydroxylase domain in the interval 134–263 (ALYLVLVEFM…TIWMDWMFGS (130 aa)). Positions 148 to 152 (HKELH) match the Histidine box-1 motif. The Histidine box-2 signature appears at 162–166 (HATHH). The helical transmembrane segment at 194-214 (HVIALFIVPIHLITHLSLLFL) threads the bilayer. The Histidine box-3 signature appears at 239–243 (HTIHH).

The protein belongs to the sterol desaturase family. It depends on Fe cation as a cofactor.

It is found in the endoplasmic reticulum membrane. The enzyme catalyses a Delta(7)-sterol + 2 Fe(II)-[cytochrome b5] + O2 + 2 H(+) = a Delta(5),Delta(7)-sterol + 2 Fe(III)-[cytochrome b5] + 2 H2O. This chain is Putative Delta(7)-sterol-C5(6)-desaturase 2 (HDF7), found in Arabidopsis thaliana (Mouse-ear cress).